The primary structure comprises 266 residues: Integral membrane protein 2B (266 aa).

Residues 1–54 are Cytoplasmic-facing; it reads MVKVTFNSALAQKEAKKDEPKSSEEALIVPPDAVAVDCKDPGDVVPVGQRRAWC. The helical; Signal-anchor for type II membrane protein transmembrane segment at 55–75 threads the bilayer; that stretch reads WCMCFGLAFMLAGVILGGAYL. The Lumenal segment spans residues 76–266; it reads YKYFALQPDD…KFAVETLICS (191 aa). The segment at 102-134 is necessary for interaction with APP and inhibitor effects on APP processing; sequence EPSADAPAARYQTIEENIKIFEEDAVEFISVPV. The region spanning 137 to 231 is the BRICHOS domain; the sequence is FADSDPANIV…LCHDKETYKL (95 aa). 2 cysteine pairs are disulfide-bonded: Cys-164/Cys-223 and Cys-248/Cys-265. N-linked (GlcNAc...) asparagine glycosylation is present at Asn-170.

Belongs to the ITM2 family. Homodimer; disulfide-linked. Interacts with SPPL2A and SPPL2B. Interacts with APP. Mature BRI2 (mBRI2) interacts with the APP amyloid-beta A4 protein; the interaction occurs at the cell surface and in the endocytic compartments and enable alpha- and beta-secretase-induced APP cleavage inhibition. Mature BRI2 (mBRI2) interacts with the APP C99; the interaction occurs in the endocytic compartments and enable gamma-secretase-induced C99 cleavage inhibition. May form heterodimers with Bri23 peptide and APP amyloid-beta protein 40. Interacts with ADAM7 in sperm; the interaction increases following capacitation. The ectodomain C-terminal part of the imBRI2 is processed by furin producing a secreted Bri23 peptide and a mature BRI2, membrane form (mBRI2). The remaining part of the ectodomain of mBRI2 containing the BRICHOS domain is cleaved by ADAM10 and is secreted (BRI2C, soluble form). The membrane-bound N-terminal fragment (BRI2C, membrane form) is further proteolytically processed by SPPL2A and SPPL2B through regulated intramembrane proteolysis producing a secreted C-peptide and a BRI2 intracellular domain (BRI2 ICD) released in the cytosol. Shedding by ADAM10 facilitates intramembrane cleavage but is not absolutely required for BRI2 ICD generation. Post-translationally, glycosylation at Asn-170 is important for cell surface localization, but doesn't affect furin- and ADAM10-induced proteolytic processing. Expressed in the brain, testis, testicular sperm, epididymis and mature epididymal sperm (at protein level).

The protein localises to the golgi apparatus membrane. It localises to the cell membrane. Its subcellular location is the endosome membrane. It is found in the secreted. Its function is as follows. Plays a regulatory role in the processing of the amyloid-beta A4 precursor protein (APP) and acts as an inhibitor of the amyloid-beta peptide aggregation and fibrils deposition. Plays a role in the induction of neurite outgrowth. Functions as a protease inhibitor by blocking access of secretases to APP cleavage sites. Mature BRI2 (mBRI2) functions as a modulator of the amyloid-beta A4 precursor protein (APP) processing leading to a strong reduction in the secretion of secretase-processed amyloid-beta protein 40 and amyloid-beta protein 42. In terms of biological role, bri23 peptide prevents aggregation of APP amyloid-beta protein 42 into toxic oligomers. The chain is Integral membrane protein 2B (Itm2b) from Mus musculus (Mouse).